The primary structure comprises 395 residues: Phosphoglycerate kinase (395 aa).

Residues 21 to 23 (DFN), arginine 36, 59 to 62 (HLGR), arginine 120, and arginine 153 each bind substrate. Residues lysine 203, glutamate 325, and 351–354 (GGDS) contribute to the ATP site.

The protein belongs to the phosphoglycerate kinase family. In terms of assembly, monomer.

It localises to the cytoplasm. The catalysed reaction is (2R)-3-phosphoglycerate + ATP = (2R)-3-phospho-glyceroyl phosphate + ADP. The protein operates within carbohydrate degradation; glycolysis; pyruvate from D-glyceraldehyde 3-phosphate: step 2/5. This Roseiflexus castenholzii (strain DSM 13941 / HLO8) protein is Phosphoglycerate kinase.